We begin with the raw amino-acid sequence, 57 residues long: Small ribosomal subunit protein eS31 (57 aa).

4 residues coordinate Zn(2+): cysteine 29, cysteine 32, cysteine 47, and cysteine 50. A C4-type zinc finger spans residues cysteine 29 to cysteine 50.

Belongs to the eukaryotic ribosomal protein eS31 family. Part of the 30S ribosomal subunit. Zn(2+) serves as cofactor.

This Nitrosopumilus maritimus (strain SCM1) protein is Small ribosomal subunit protein eS31.